The following is a 237-amino-acid chain: Protein YIPF4 (237 aa).

At 1-106 (MQFSPTNGDF…FNRQVVRDNP (106 aa)) the chain is on the cytoplasmic side. A helical transmembrane segment spans residues 107-127 (DFWGPLAVVLLFSMISIYGQF). Residues 128 to 131 (RVVS) are Lumenal-facing. A helical transmembrane segment spans residues 132 to 152 (WIITIWIFGSLTIFLLARVLG). The Cytoplasmic portion of the chain corresponds to 153–160 (GEVSYGQV). The chain crosses the membrane as a helical span at residues 161–181 (LGVIGYSLLPLIVIAPLLLVI). Residues 182–188 (GGFEVVS) lie on the Lumenal side of the membrane. A helical membrane pass occupies residues 189 to 209 (TLIKLFGVFWAAYSAASLLVG). At 210–216 (DEFKTKK) the chain is on the cytoplasmic side. The chain crosses the membrane as a helical span at residues 217–237 (PLLIYPIFLLYIYFLSLYTGV).

Belongs to the YIP1 family.

It localises to the golgi apparatus. Its subcellular location is the cis-Golgi network membrane. In terms of biological role, involved in the maintenance of the Golgi structure. This chain is Protein YIPF4 (yipf4), found in Danio rerio (Zebrafish).